The sequence spans 1412 residues: DNA-directed RNA polymerase subunit beta' (1412 aa).

Zn(2+) is bound by residues cysteine 70, cysteine 72, cysteine 85, and cysteine 88. Mg(2+) is bound by residues aspartate 460, aspartate 462, and aspartate 464. Zn(2+) contacts are provided by cysteine 819, cysteine 893, cysteine 900, and cysteine 903. Positions 1393–1412 (EAFEFGTPSAPAEEPQHPAE) are disordered.

This sequence belongs to the RNA polymerase beta' chain family. In terms of assembly, the RNAP catalytic core consists of 2 alpha, 1 beta, 1 beta' and 1 omega subunit. When a sigma factor is associated with the core the holoenzyme is formed, which can initiate transcription. The cofactor is Mg(2+). Requires Zn(2+) as cofactor.

The enzyme catalyses RNA(n) + a ribonucleoside 5'-triphosphate = RNA(n+1) + diphosphate. In terms of biological role, DNA-dependent RNA polymerase catalyzes the transcription of DNA into RNA using the four ribonucleoside triphosphates as substrates. This Burkholderia mallei (strain NCTC 10229) protein is DNA-directed RNA polymerase subunit beta'.